Reading from the N-terminus, the 605-residue chain is Conglutin beta 7 (605 aa).

A signal peptide spans 1–30 (MARMRVRFPTLVLLLGILFLMAVSIGIAYG). Residues 37 to 105 (NHERPGEREH…REPCREREQE (69 aa)) show a composition bias toward basic and acidic residues. Disordered regions lie at residues 37-193 (NHER…RFQT), 346-367 (LGNEDEQEDEEQRRGQEQSYQD), and 382-405 (LRKHAQSSSRKGKPSESGPFNLRS). The span at 140 to 149 (QGSSSSSRKQ) shows a compositional bias: low complexity. Residues 150 to 179 (SGYERRQYHERREQRDEKEKEQDSRSDSRR) are compositionally biased toward basic and acidic residues. Residues 184–342 (YHFSSERFQT…TFNTRYEEIQ (159 aa)) enclose the Cupin type-1 1 domain. A Cupin type-1 2 domain is found at 401–563 (FNLRSNESIY…TFPGSAQDVE (163 aa)). Residues asparagine 406 and asparagine 513 are each glycosylated (N-linked (GlcNAc...) asparagine). Residues 574–593 (FANAQPQQKQQREKEGRRGR) are disordered.

This sequence belongs to the 7S seed storage protein family. As to quaternary structure, component of globulins complexes which accumulate in seeds.

In terms of biological role, seed storage protein. Accumulates during seed development and is hydrolyzed after germination to provide a carbon and nitrogen source for the developing seedling. The sequence is that of Conglutin beta 7 from Lupinus angustifolius (Narrow-leaved blue lupine).